Consider the following 354-residue polypeptide: Guanine nucleotide-binding protein G(i) subunit alpha (354 aa).

G2 carries the N-myristoyl glycine lipid modification. A lipid anchor (S-palmitoyl cysteine) is attached at C3. The G-alpha domain maps to 32–354 (REVKLLLLGA…KNNLKDCGLF (323 aa)). The segment at 35–48 (KLLLLGAGESGKST) is G1 motif. Residues 40 to 47 (GAGESGKS), 175 to 181 (LRTRVKT), 200 to 204 (DVGGQ), 269 to 272 (NKKD), and A326 each bind GTP. Mg(2+)-binding residues include S47 and T181. The interval 173–181 (DVLRTRVKT) is G2 motif. The interval 196-205 (FKMFDVGGQR) is G3 motif. The segment at 265–272 (ILFLNKKD) is G4 motif. The interval 324 to 329 (TCATDT) is G5 motif.

It belongs to the G-alpha family. G(i/o/t/z) subfamily. In terms of assembly, g proteins are composed of 3 units; alpha, beta and gamma. The alpha chain contains the guanine nucleotide binding site.

Functionally, guanine nucleotide-binding proteins (G proteins) are involved as modulators or transducers in various transmembrane signaling systems. The chain is Guanine nucleotide-binding protein G(i) subunit alpha from Planorbella trivolvis (Marsh rams-horn).